Here is a 349-residue protein sequence, read N- to C-terminus: N-acetyl-gamma-glutamyl-phosphate reductase (349 aa).

Residue Cys152 is part of the active site.

Belongs to the NAGSA dehydrogenase family. Type 1 subfamily.

The protein localises to the cytoplasm. The catalysed reaction is N-acetyl-L-glutamate 5-semialdehyde + phosphate + NADP(+) = N-acetyl-L-glutamyl 5-phosphate + NADPH + H(+). Its pathway is amino-acid biosynthesis; L-arginine biosynthesis; N(2)-acetyl-L-ornithine from L-glutamate: step 3/4. Functionally, catalyzes the NADPH-dependent reduction of N-acetyl-5-glutamyl phosphate to yield N-acetyl-L-glutamate 5-semialdehyde. The protein is N-acetyl-gamma-glutamyl-phosphate reductase of Clavibacter sepedonicus (Clavibacter michiganensis subsp. sepedonicus).